The following is a 440-amino-acid chain: Transposon Ty1-GR2 Gag polyprotein (440 aa).

Residues 1–16 (MESQQLSQHSHISHGS) show a composition bias toward low complexity. Disordered regions lie at residues 1–93 (MESQ…MMTQ), 126–173 (PQSQ…RPPP), and 352–440 (GSRN…PGTY). Composition is skewed to polar residues over residues 48–60 (TKAN…TPAS) and 127–152 (QSQF…GNTF). A compositionally biased stretch (low complexity) spans 153-165 (TDSSSADSDMTST). Residues 299 to 401 (NNGIHINNKV…NSKSKTARAH (103 aa)) form an RNA-binding region. Residues 402 to 418 (NVSTSNNSPSTDNDSIS) are compositionally biased toward low complexity. A Phosphoserine modification is found at Ser416. The span at 419–428 (KSTTEPIQLN) shows a compositional bias: polar residues. The span at 429 to 440 (NKHDLHLRPGTY) shows a compositional bias: basic and acidic residues.

As to quaternary structure, homotrimer.

It localises to the cytoplasm. Its function is as follows. Capsid protein (CA) is the structural component of the virus-like particle (VLP), forming the shell that encapsulates the retrotransposons dimeric RNA genome. The particles are assembled from trimer-clustered units and there are holes in the capsid shells that allow for the diffusion of macromolecules. CA also has nucleocapsid-like chaperone activity, promoting primer tRNA(i)-Met annealing to the multipartite primer-binding site (PBS), dimerization of Ty1 RNA and initiation of reverse transcription. The protein is Transposon Ty1-GR2 Gag polyprotein (TY1A-GR2) of Saccharomyces cerevisiae (strain ATCC 204508 / S288c) (Baker's yeast).